A 547-amino-acid chain; its full sequence is Chaperonin GroEL (547 aa).

Residues 29–32 (TLGP), Lys-50, 86–90 (DGTTT), Gly-414, and Asp-495 contribute to the ATP site. A disordered region spans residues 525-547 (PSDKEDSIPPMRGGMGGMGGMDF). A compositionally biased stretch (gly residues) spans 537–547 (GGMGGMGGMDF).

It belongs to the chaperonin (HSP60) family. Forms a cylinder of 14 subunits composed of two heptameric rings stacked back-to-back. Interacts with the co-chaperonin GroES.

It is found in the cytoplasm. The enzyme catalyses ATP + H2O + a folded polypeptide = ADP + phosphate + an unfolded polypeptide.. In terms of biological role, together with its co-chaperonin GroES, plays an essential role in assisting protein folding. The GroEL-GroES system forms a nano-cage that allows encapsulation of the non-native substrate proteins and provides a physical environment optimized to promote and accelerate protein folding. The sequence is that of Chaperonin GroEL from Rickettsia felis (strain ATCC VR-1525 / URRWXCal2) (Rickettsia azadi).